We begin with the raw amino-acid sequence, 45 residues long: Omega-hexatoxin-Hv2a (45 aa).

3 cysteine pairs are disulfide-bonded: Cys-4-Cys-18, Cys-11-Cys-24, and Cys-17-Cys-29.

This sequence belongs to the neurotoxin 15 family. 02 (omega-actx) subfamily. As to expression, expressed by the venom gland.

Its subcellular location is the secreted. Functionally, potent inhibitor of insect (bee brain), but not mammalian (rat trigeminal neurons), voltage-gated calcium channels (Cav). In vivo, injection into lone star ticks (Amblyomma americanum) induces curling of all eight legs into closed loops, followed by death. The polypeptide is Omega-hexatoxin-Hv2a (Hadronyche versuta (Blue mountains funnel-web spider)).